We begin with the raw amino-acid sequence, 340 residues long: Ketol-acid reductoisomerase (NADP(+)) (340 aa).

Positions 3-183 (LSVYYDKDCN…GGGRTGIIET (181 aa)) constitute a KARI N-terminal Rossmann domain. Residues 26 to 29 (FGSQ), Ser-54, and 84 to 87 (DELQ) each bind NADP(+). His-109 is an active-site residue. Gly-135 lines the NADP(+) pocket. One can recognise a KARI C-terminal knotted domain in the interval 184–329 (TFKDETETDL…ERLRAMMPWI (146 aa)). Residues Asp-192, Glu-196, Glu-228, and Glu-232 each contribute to the Mg(2+) site. Ser-253 contacts substrate.

It belongs to the ketol-acid reductoisomerase family. Mg(2+) is required as a cofactor.

The catalysed reaction is (2R)-2,3-dihydroxy-3-methylbutanoate + NADP(+) = (2S)-2-acetolactate + NADPH + H(+). It carries out the reaction (2R,3R)-2,3-dihydroxy-3-methylpentanoate + NADP(+) = (S)-2-ethyl-2-hydroxy-3-oxobutanoate + NADPH + H(+). The protein operates within amino-acid biosynthesis; L-isoleucine biosynthesis; L-isoleucine from 2-oxobutanoate: step 2/4. It participates in amino-acid biosynthesis; L-valine biosynthesis; L-valine from pyruvate: step 2/4. Its function is as follows. Involved in the biosynthesis of branched-chain amino acids (BCAA). Catalyzes an alkyl-migration followed by a ketol-acid reduction of (S)-2-acetolactate (S2AL) to yield (R)-2,3-dihydroxy-isovalerate. In the isomerase reaction, S2AL is rearranged via a Mg-dependent methyl migration to produce 3-hydroxy-3-methyl-2-ketobutyrate (HMKB). In the reductase reaction, this 2-ketoacid undergoes a metal-dependent reduction by NADPH to yield (R)-2,3-dihydroxy-isovalerate. The polypeptide is Ketol-acid reductoisomerase (NADP(+)) (Wolinella succinogenes (strain ATCC 29543 / DSM 1740 / CCUG 13145 / JCM 31913 / LMG 7466 / NCTC 11488 / FDC 602W) (Vibrio succinogenes)).